The chain runs to 133 residues: Ribonuclease P protein component (133 aa).

Belongs to the RnpA family. In terms of assembly, consists of a catalytic RNA component (M1 or rnpB) and a protein subunit.

It carries out the reaction Endonucleolytic cleavage of RNA, removing 5'-extranucleotides from tRNA precursor.. Its function is as follows. RNaseP catalyzes the removal of the 5'-leader sequence from pre-tRNA to produce the mature 5'-terminus. It can also cleave other RNA substrates such as 4.5S RNA. The protein component plays an auxiliary but essential role in vivo by binding to the 5'-leader sequence and broadening the substrate specificity of the ribozyme. This is Ribonuclease P protein component from Bartonella quintana (strain Toulouse) (Rochalimaea quintana).